Reading from the N-terminus, the 196-residue chain is Na(+)-translocating ferredoxin:NAD(+) oxidoreductase complex subunit E (196 aa).

Transmembrane regions (helical) follow at residues 38-58 (MGMG…ISAL), 68-88 (IPAF…LMKA), 92-112 (ALDA…IILA), 127-147 (FADA…LGSI), and 169-189 (VLLM…IGLI).

It belongs to the NqrDE/RnfAE family. The complex is composed of six subunits: RnfA, RnfB, RnfC, RnfD, RnfE and RnfG.

Its subcellular location is the cell membrane. The enzyme catalyses 2 reduced [2Fe-2S]-[ferredoxin] + Na(+)(in) + NAD(+) + H(+) = 2 oxidized [2Fe-2S]-[ferredoxin] + Na(+)(out) + NADH. In terms of biological role, part of a membrane-bound complex that couples electron transfer with translocation of ions across the membrane. Couples electron transfer from reduced ferredoxin to NAD(+) with electrogenic movement of Na(+) out of the cell. Involved in caffeate respiration. The protein is Na(+)-translocating ferredoxin:NAD(+) oxidoreductase complex subunit E of Acetobacterium woodii (strain ATCC 29683 / DSM 1030 / JCM 2381 / KCTC 1655 / WB1).